The sequence spans 271 residues: Nodulin-26 (271 aa).

Transmembrane regions (helical) follow at residues 40–62 (LVAE…VVNE) and 72–94 (GIAI…ISGG). The NPA 1 signature appears at 97–99 (NPA). 3 consecutive transmembrane segments (helical) span residues 115–137 (VPAY…RLLF), 152–174 (TNLQ…ICGV), and 181–203 (VGEF…GGPV). An NPA 2 motif is present at residues 209-211 (NPA). The helical transmembrane segment at 225 to 247 (GIWIYLLAPVVGAIAGAWVYNIV) threads the bilayer. Residue serine 262 is modified to Phosphoserine; by CPK.

Belongs to the MIP/aquaporin (TC 1.A.8) family. NIP (TC 1.A.8.12) subfamily.

It is found in the symbiosome. It localises to the peribacteroid membrane. Functionally, aquaporins facilitate the transport of water and small neutral solutes across cell membranes. This aquaporin may function in transporting small molecules across the peribacteroid membranes. This is Nodulin-26 from Glycine max (Soybean).